The sequence spans 198 residues: MHYPEPITKLIDSFMKLPGIGPKSAARLAFYVLDMKEDDVLDFAKALVDAKRNLSFCSVCGHITDKDPCYICADTSRDRSVICVVQESKDVIAMEKMRDFHGLYHVLHGTISPMDGIGPEDINIPDLLKRLQDDTIEEVILATNPNVEGEATAMYISRLLKPSGIKVTRIAHGLPVGGDLEYADEVTLSKAMEGRREV.

Residues 57 to 72 form a C4-type zinc finger; it reads CSVCGHITDKDPCYIC. Residues 80–175 enclose the Toprim domain; sequence SVICVVQESK…KVTRIAHGLP (96 aa).

The protein belongs to the RecR family.

May play a role in DNA repair. It seems to be involved in an RecBC-independent recombinational process of DNA repair. It may act with RecF and RecO. The sequence is that of Recombination protein RecR from Listeria monocytogenes serotype 4b (strain CLIP80459).